A 1394-amino-acid polypeptide reads, in one-letter code: ATP-dependent permease AUS1 (1394 aa).

Residues methionine 1 to arginine 420 are Cytoplasmic-facing. The ABC transporter 1 domain occupies lysine 33–aspartate 273. A run of 6 helical transmembrane segments spans residues glycine 421–phenylalanine 443, threonine 468–alanine 490, alanine 497–leucine 519, valine 529–leucine 551, phenylalanine 558–leucine 575, and valine 636–serine 658. The Cytoplasmic segment spans residues glutamine 659–threonine 1080. In terms of domain architecture, ABC transporter 2 spans isoleucine 751–valine 978. Glycine 782 to threonine 789 contributes to the ATP binding site. Helical transmembrane passes span tyrosine 1081–isoleucine 1103, isoleucine 1107–asparagine 1129, valine 1156–valine 1178, alanine 1193–isoleucine 1215, alanine 1224–serine 1246, and phenylalanine 1346–tyrosine 1368. At valine 1369–asparagine 1394 the chain is on the cytoplasmic side.

The protein belongs to the ABC transporter superfamily. ABCG family. PDR (TC 3.A.1.205) subfamily.

Its subcellular location is the membrane. Transporter involved in the uptake of sterol. This is ATP-dependent permease AUS1 (AUS1) from Saccharomyces cerevisiae (strain ATCC 204508 / S288c) (Baker's yeast).